Reading from the N-terminus, the 408-residue chain is WD repeat-containing protein JIP5 (408 aa).

WD repeat units follow at residues 5–44 (PVGS…DSHN), 50–86 (PSKR…TTDI), 87–130 (DARS…SVKT), 133–172 (QHFD…PKVV), 177–216 (DQED…GDCV), and 221–267 (GHPL…FLGV). The segment at 311-408 (VDSDEEEDDE…VIDKDFFDGL (98 aa)) is disordered. Acidic residues-rich tracts occupy residues 313–339 (SDEE…EDEE) and 356–366 (DESDDEDEEME). The span at 396 to 408 (KETVIDKDFFDGL) shows a compositional bias: basic and acidic residues.

The protein belongs to the WD repeat WDR55 family.

It localises to the nucleus. The protein localises to the nucleolus. In Coprinopsis cinerea (strain Okayama-7 / 130 / ATCC MYA-4618 / FGSC 9003) (Inky cap fungus), this protein is WD repeat-containing protein JIP5 (JIP5).